We begin with the raw amino-acid sequence, 390 residues long: Ankyrin repeat domain-containing protein 63 (390 aa).

ANK repeat units follow at residues Ala11–Ile40, Gln46–Leu79, Arg83–Ala112, Ala116–Leu145, and Ala153–Ala182. Disordered stretches follow at residues Ala181–Arg213 and Ala226–Ser245. Position 193 is a phosphoserine (Ser193). A Phosphoserine modification is found at Ser304. Residues Val320–Trp377 form a disordered region.

In Mus musculus (Mouse), this protein is Ankyrin repeat domain-containing protein 63.